A 243-amino-acid chain; its full sequence is Type III pantothenate kinase (243 aa).

Residue 6–13 (DIGNTNLK) coordinates ATP. Residue 101 to 104 (GSDI) coordinates substrate. Asp103 functions as the Proton acceptor in the catalytic mechanism. Residue Thr125 coordinates ATP. A substrate-binding site is contributed by Thr176.

The protein belongs to the type III pantothenate kinase family. In terms of assembly, homodimer. NH4(+) serves as cofactor. Requires K(+) as cofactor.

It is found in the cytoplasm. The enzyme catalyses (R)-pantothenate + ATP = (R)-4'-phosphopantothenate + ADP + H(+). It participates in cofactor biosynthesis; coenzyme A biosynthesis; CoA from (R)-pantothenate: step 1/5. Functionally, catalyzes the phosphorylation of pantothenate (Pan), the first step in CoA biosynthesis. The chain is Type III pantothenate kinase from Mycoplasma mobile (strain ATCC 43663 / 163K / NCTC 11711) (Mesomycoplasma mobile).